Reading from the N-terminus, the 94-residue chain is Co-chaperonin GroES (94 aa).

This sequence belongs to the GroES chaperonin family. As to quaternary structure, heptamer of 7 subunits arranged in a ring. Interacts with the chaperonin GroEL.

Its subcellular location is the cytoplasm. Together with the chaperonin GroEL, plays an essential role in assisting protein folding. The GroEL-GroES system forms a nano-cage that allows encapsulation of the non-native substrate proteins and provides a physical environment optimized to promote and accelerate protein folding. GroES binds to the apical surface of the GroEL ring, thereby capping the opening of the GroEL channel. The chain is Co-chaperonin GroES from Geobacillus sp. (strain WCH70).